Consider the following 239-residue polypeptide: LexA repressor (239 aa).

The segment at residues 26 to 46 (FDEMKDALDLASKSGIHRLIT) is a DNA-binding region (H-T-H motif). Positions 84–107 (SPSVIEGSLGKPQPVATPAPAKSV) are disordered. Residues S159 and K197 each act as for autocatalytic cleavage activity in the active site.

The protein belongs to the peptidase S24 family. Homodimer.

It carries out the reaction Hydrolysis of Ala-|-Gly bond in repressor LexA.. In terms of biological role, represses a number of genes involved in the response to DNA damage (SOS response), including recA and lexA. In the presence of single-stranded DNA, RecA interacts with LexA causing an autocatalytic cleavage which disrupts the DNA-binding part of LexA, leading to derepression of the SOS regulon and eventually DNA repair. This Rhizobium johnstonii (strain DSM 114642 / LMG 32736 / 3841) (Rhizobium leguminosarum bv. viciae) protein is LexA repressor.